The chain runs to 622 residues: DNA mismatch repair protein MutL (622 aa).

The segment covering 399 to 414 (SSQNFHPDENDYRAEE) has biased composition (basic and acidic residues). The disordered stretch occupies residues 399–422 (SSQNFHPDENDYRAEEASPAEENP).

This sequence belongs to the DNA mismatch repair MutL/HexB family.

Its function is as follows. This protein is involved in the repair of mismatches in DNA. It is required for dam-dependent methyl-directed DNA mismatch repair. May act as a 'molecular matchmaker', a protein that promotes the formation of a stable complex between two or more DNA-binding proteins in an ATP-dependent manner without itself being part of a final effector complex. The sequence is that of DNA mismatch repair protein MutL from Phocaeicola vulgatus (strain ATCC 8482 / DSM 1447 / JCM 5826 / CCUG 4940 / NBRC 14291 / NCTC 11154) (Bacteroides vulgatus).